Consider the following 651-residue polypeptide: Apical membrane antigen 1-like protein (651 aa).

Residues 1 to 41 (MPTESRSILARAEETRCRHLSRLLRAGLVFLLCDVLTSCLA) form the signal peptide. Residues 42-81 (TPELQNTVIRSSKAHHLQLLFSSRSTPAVKFPLDATLSAP) constitute a propeptide, removed in mature form. Residues 42–570 (TPELQNTVIR…VEKEGSGGNT (529 aa)) lie on the Extracellular side of the membrane. 7 cysteine pairs are disulfide-bonded: Cys-141/Cys-309, Cys-215/Cys-248, Cys-264/Cys-277, Cys-327/Cys-417, Cys-347/Cys-408, Cys-441/Cys-463, and Cys-453/Cys-475. N-linked (GlcNAc...) asparagine glycosylation occurs at Asn-230. One copy of the 1; approximate repeat lies at 483-486 (PPVK). The interval 483 to 531 (PPVKPPVEPPVEPPVEPPVEPPVEPPVEPPVEPPVEPPVEPPVVEPPTE) is 12 x 4 AA approximate tandem-repeats of P-P-V-E. The span at 483–547 (PPVKPPVEPP…EPPVVLPPTP (65 aa)) shows a compositional bias: pro residues. The tract at residues 483–567 (PPVKPPVEPP…DETVEKEGSG (85 aa)) is disordered. 9 repeat units span residues 487 to 490 (PPVE), 491 to 494 (PPVE), 495 to 498 (PPVE), 499 to 502 (PPVE), 503 to 506 (PPVE), 507 to 510 (PPVE), 511 to 514 (PPVE), 515 to 518 (PPVE), and 519 to 522 (PPVE). The 11; approximate repeat unit spans residues 523–527 (PPVVE). A 12; approximate repeat occupies 528-531 (PPTE). The chain crosses the membrane as a helical span at residues 571–591 (ALIAGSVLGMLIILALVGTCV). Residues 592 to 651 (GFYYRKRPLPPTERPTVEASGGREVEGPSDVAVPPDHSWWGEGEHETESLLGSRAVDAEF) are Cytoplasmic-facing. The segment at 598–651 (RPLPPTERPTVEASGGREVEGPSDVAVPPDHSWWGEGEHETESLLGSRAVDAEF) is disordered.

Belongs to the apicomplexan parasites AMA1 family. Post-translationally, proteolytically cleaved within its transmembrane domain, releasing a soluble form from the cell surface.

It is found in the cell membrane. The protein localises to the secreted. Its function is as follows. May play a role in host cell invasion. This is Apical membrane antigen 1-like protein from Toxoplasma gondii (strain ATCC 50861 / VEG).